The sequence spans 452 residues: Probable alpha-galactosidase B (452 aa).

A signal peptide spans 1–24; sequence MLHRATTTAAAAAAAALLLCPVQA. Cysteine 47 and cysteine 79 are disulfide-bonded. 2 N-linked (GlcNAc...) asparagine glycosylation sites follow: asparagine 87 and asparagine 138. Cysteine 129 and cysteine 159 are disulfide-bonded. Aspartate 157 acts as the Nucleophile in catalysis. The N-linked (GlcNAc...) asparagine glycan is linked to asparagine 184. 231–235 serves as a coordination point for substrate; the sequence is DWGQA. Aspartate 253 functions as the Proton donor in the catalytic mechanism. Asparagine 292, asparagine 391, asparagine 409, and asparagine 410 each carry an N-linked (GlcNAc...) asparagine glycan.

The protein belongs to the glycosyl hydrolase 27 family.

The protein localises to the secreted. It carries out the reaction Hydrolysis of terminal, non-reducing alpha-D-galactose residues in alpha-D-galactosides, including galactose oligosaccharides, galactomannans and galactolipids.. Functionally, hydrolyzes a variety of simple alpha-D-galactoside as well as more complex molecules such as oligosaccharides and polysaccharides. This chain is Probable alpha-galactosidase B, found in Talaromyces emersonii (Thermophilic fungus).